We begin with the raw amino-acid sequence, 763 residues long: 5-methyltetrahydropteroyltriglutamate--homocysteine methyltransferase (763 aa).

5-methyltetrahydropteroyltri-L-glutamate is bound by residues 16-19 (RELK) and Lys-117. Residues 440 to 442 (IGS) and Glu-493 each bind L-homocysteine. Residues 440–442 (IGS) and Glu-493 contribute to the L-methionine site. Residues 524-525 (RC) and Trp-570 each bind 5-methyltetrahydropteroyltri-L-glutamate. Asp-608 is a binding site for L-homocysteine. Position 608 (Asp-608) interacts with L-methionine. Glu-614 is a 5-methyltetrahydropteroyltri-L-glutamate binding site. Zn(2+) is bound by residues His-650, Cys-652, and Glu-674. The Proton donor role is filled by His-703. Position 735 (Cys-735) interacts with Zn(2+).

It belongs to the vitamin-B12 independent methionine synthase family. Zn(2+) serves as cofactor.

The enzyme catalyses 5-methyltetrahydropteroyltri-L-glutamate + L-homocysteine = tetrahydropteroyltri-L-glutamate + L-methionine. It participates in amino-acid biosynthesis; L-methionine biosynthesis via de novo pathway; L-methionine from L-homocysteine (MetE route): step 1/1. In terms of biological role, catalyzes the transfer of a methyl group from 5-methyltetrahydrofolate to homocysteine resulting in methionine formation. The sequence is that of 5-methyltetrahydropteroyltriglutamate--homocysteine methyltransferase from Alcanivorax borkumensis (strain ATCC 700651 / DSM 11573 / NCIMB 13689 / SK2).